Reading from the N-terminus, the 213-residue chain is Transmembrane emp24 domain-containing protein p24delta8 (213 aa).

The N-terminal stretch at methionine 1–serine 22 is a signal peptide. The Lumenal segment spans residues methionine 23 to lysine 180. Residues threonine 32 to threonine 148 form the GOLD domain. Asparagine 97 carries N-linked (GlcNAc...) asparagine glycosylation. Positions leucine 163–serine 176 form a coiled coil. Residue arginine 166 is modified to Omega-N-methylated arginine. An N-linked (GlcNAc...) asparagine glycan is attached at asparagine 174. A helical membrane pass occupies residues methionine 181–leucine 203. The interaction with ARF1 stretch occupies residues histidine 202–isoleucine 213. Residues lysine 204 to isoleucine 213 are Cytoplasmic-facing. Positions phenylalanine 206–phenylalanine 207 match the COPII vesicle coat-binding motif. Residues phenylalanine 206–isoleucine 213 carry the COPI vesicle coat-binding motif.

It belongs to the EMP24/GP25L family. As to quaternary structure, probably oligomerizes with other members of the EMP24/GP25L family. Associates with the COPI vesicle coat (coatomer). Associates with the COPII vesicle coat (coatomer). Interacts with ARF1 (GDP-bound).

It localises to the endoplasmic reticulum membrane. Its subcellular location is the golgi apparatus. The protein localises to the cis-Golgi network membrane. The protein resides in the golgi stack membrane. Involved in vesicular protein trafficking. Mainly functions in the early secretory pathway. Thought to act as cargo receptor at the lumenal side for incorporation of secretory cargo molecules into transport vesicles and to be involved in vesicle coat formation at the cytoplasmic side. On Golgi membranes, acts as a primary receptor for ARF1-GDP which is involved in COPI-vesicle formation. This Arabidopsis thaliana (Mouse-ear cress) protein is Transmembrane emp24 domain-containing protein p24delta8.